The following is a 389-amino-acid chain: Major outer membrane porin (389 aa).

The protein belongs to the chlamydial porin (CP) (TC 1.B.2) family. As to quaternary structure, part of a disulfide cross-linked outer membrane complex (COMC) composed of the major outer membrane porin (MOMP), the small cysteine-rich protein (OmcA) and the large cysteine-rich periplasmic protein (OmcB).

Its subcellular location is the cell outer membrane. In terms of biological role, in elementary bodies (EBs, the infectious stage, which is able to survive outside the host cell) provides the structural integrity of the outer envelope through disulfide cross-links with the small cysteine-rich protein and the large cysteine-rich periplasmic protein. It has been described in publications as the Sarkosyl-insoluble COMC (Chlamydia outer membrane complex), and serves as the functional equivalent of peptidoglycan. Functionally, permits diffusion of specific solutes through the outer membrane. The protein is Major outer membrane porin (ompA) of Chlamydia pneumoniae (Chlamydophila pneumoniae).